The chain runs to 388 residues: S-adenosylmethionine synthase (388 aa).

His17 is a binding site for ATP. Mg(2+) is bound at residue Asp19. Residue Glu45 coordinates K(+). Positions 58 and 101 each coordinate L-methionine. The flexible loop stretch occupies residues 101–111; sequence QSPDIGQGVDT. Residues 160–162, 226–227, Asp235, 241–242, Ala258, and Lys262 each bind ATP; these read DGK, RF, and RK. Asp235 contacts L-methionine. L-methionine is bound at residue Lys266.

This sequence belongs to the AdoMet synthase family. As to quaternary structure, homotetramer; dimer of dimers. Mg(2+) is required as a cofactor. K(+) serves as cofactor.

Its subcellular location is the cytoplasm. It catalyses the reaction L-methionine + ATP + H2O = S-adenosyl-L-methionine + phosphate + diphosphate. Its pathway is amino-acid biosynthesis; S-adenosyl-L-methionine biosynthesis; S-adenosyl-L-methionine from L-methionine: step 1/1. Functionally, catalyzes the formation of S-adenosylmethionine (AdoMet) from methionine and ATP. The overall synthetic reaction is composed of two sequential steps, AdoMet formation and the subsequent tripolyphosphate hydrolysis which occurs prior to release of AdoMet from the enzyme. This is S-adenosylmethionine synthase from Anaeromyxobacter sp. (strain K).